A 77-amino-acid polypeptide reads, in one-letter code: Tautomerase PptA (77 aa).

P2 serves as the catalytic Proton acceptor; via imino nitrogen.

The protein belongs to the 4-oxalocrotonate tautomerase family. PptA subfamily. In terms of assembly, homodimer.

The protein localises to the cytoplasm. In Escherichia coli (strain K12 / MC4100 / BW2952), this protein is Tautomerase PptA.